Here is a 420-residue protein sequence, read N- to C-terminus: Histidine--tRNA ligase (420 aa).

This sequence belongs to the class-II aminoacyl-tRNA synthetase family. In terms of assembly, homodimer.

It is found in the cytoplasm. The enzyme catalyses tRNA(His) + L-histidine + ATP = L-histidyl-tRNA(His) + AMP + diphosphate + H(+). The protein is Histidine--tRNA ligase of Acholeplasma laidlawii (strain PG-8A).